Consider the following 160-residue polypeptide: Cytochrome b6-f complex subunit 4 (160 aa).

3 helical membrane-spanning segments follow: residues 36 to 56 (LLYT…GLAV), 95 to 115 (LLGV…PFIE), and 131 to 151 (TVFL…TLPI).

This sequence belongs to the cytochrome b family. PetD subfamily. In terms of assembly, the 4 large subunits of the cytochrome b6-f complex are cytochrome b6, subunit IV (17 kDa polypeptide, petD), cytochrome f and the Rieske protein, while the 4 small subunits are petG, petL, petM and petN. The complex functions as a dimer.

Its subcellular location is the plastid. It is found in the chloroplast thylakoid membrane. Its function is as follows. Component of the cytochrome b6-f complex, which mediates electron transfer between photosystem II (PSII) and photosystem I (PSI), cyclic electron flow around PSI, and state transitions. The sequence is that of Cytochrome b6-f complex subunit 4 from Mesostigma viride (Green alga).